The primary structure comprises 287 residues: Efem/EfeO family lipoprotein (287 aa).

An N-terminal signal peptide occupies residues 1 to 17; that stretch reads MKKLPTILLASSLLLAA. A lipid anchor (N-palmitoyl cysteine) is attached at cysteine 18. The S-diacylglycerol cysteine moiety is linked to residue cysteine 18. A disordered region spans residues 20-50; that stretch reads NNSHSDDNSNKDKQSQSSKGENKASLQKATK. Over residues 23 to 33 the composition is skewed to basic and acidic residues; that stretch reads HSDDNSNKDKQ.

This sequence belongs to the EfeM/EfeO family.

It is found in the cell membrane. The chain is Efem/EfeO family lipoprotein from Staphylococcus haemolyticus (strain JCSC1435).